Here is a 392-residue protein sequence, read N- to C-terminus: Outer membrane protein assembly factor BamB (392 aa).

The signal sequence occupies residues 1–19; that stretch reads MQLRKLLLPGLLSVTLLSG. Cys-20 is lipidated: N-palmitoyl cysteine. Cys-20 carries S-diacylglycerol cysteine lipidation.

Belongs to the BamB family. In terms of assembly, part of the Bam complex, which is composed of the outer membrane protein BamA, and four lipoproteins BamB, BamC, BamD and BamE.

The protein localises to the cell outer membrane. Part of the outer membrane protein assembly complex, which is involved in assembly and insertion of beta-barrel proteins into the outer membrane. The protein is Outer membrane protein assembly factor BamB of Salmonella typhimurium (strain LT2 / SGSC1412 / ATCC 700720).